The chain runs to 760 residues: Exostosin-1 (760 aa).

The Cytoplasmic portion of the chain corresponds to 1–6; sequence MQAKKR. The helical; Signal-anchor for type II membrane protein transmembrane segment at 7–25 threads the bilayer; sequence YILVFVSCAFLAYAYFGGY. At 26-760 the chain is on the lumenal side; the sequence is RLKVSPLRPR…KYRQIELVGS (735 aa). N71 and N327 each carry an N-linked (GlcNAc...) asparagine glycan. UDP-N-acetyl-alpha-D-glucosamine is bound at residue R437. Residue N476 is glycosylated (N-linked (GlcNAc...) asparagine). The tract at residues 540-560 is disordered; sequence LGGSTRSQGAGPTSQTTEGRP. Positions 541–560 are enriched in polar residues; sequence GGSTRSQGAGPTSQTTEGRP. UDP-N-acetyl-alpha-D-glucosamine-binding residues include R565, D581, E582, D583, E669, D670, and R713. D583 serves as a coordination point for Mn(2+). Cysteines 668 and 716 form a disulfide. D670 is an active-site residue.

It belongs to the glycosyltransferase 47 family. In terms of assembly, interacts with sau. Mn(2+) serves as cofactor. As to expression, ubiquitously expressed in early embryos. Later (in stage 10 embryos), it is expressed at higher level in the nervous system. Ubiquitously expressed in wing imaginal disk.

It is found in the endoplasmic reticulum membrane. The protein resides in the golgi apparatus membrane. The enzyme catalyses 3-O-{[(1-&gt;4)-beta-D-GlcA-(1-&gt;4)-alpha-D-GlcNAc](n)-(1-&gt;4)-beta-D-GlcA-(1-&gt;3)-beta-D-Gal-(1-&gt;3)-beta-D-Gal-(1-&gt;4)-beta-D-Xyl}-L-seryl-[protein] + UDP-N-acetyl-alpha-D-glucosamine = 3-O-{alpha-D-GlcNAc-[(1-&gt;4)-beta-D-GlcA-(1-&gt;4)-alpha-D-GlcNAc](n)-(1-&gt;4)-beta-D-GlcA-(1-&gt;3)-beta-D-Gal-(1-&gt;3)-beta-D-Gal-(1-&gt;4)-beta-D-Xyl}-L-seryl-[protein] + UDP + H(+). It carries out the reaction 3-O-{alpha-D-GlcNAc-[(1-&gt;4)-beta-D-GlcA-(1-&gt;4)-alpha-D-GlcNAc](n)-(1-&gt;4)-beta-D-GlcA-(1-&gt;3)-beta-D-Gal-(1-&gt;3)-beta-D-Gal-(1-&gt;4)-beta-D-Xyl}-L-seryl-[protein] + UDP-alpha-D-glucuronate = 3-O-{[(1-&gt;4)-beta-D-GlcA-(1-&gt;4)-alpha-D-GlcNAc](n+1)-(1-&gt;4)-beta-D-GlcA-(1-&gt;3)-beta-D-Gal-(1-&gt;3)-beta-D-Gal-(1-&gt;4)-beta-D-Xyl}-L-seryl-[protein] + UDP + H(+). Its pathway is protein modification; protein glycosylation. The protein operates within glycan metabolism; heparan sulfate biosynthesis. It functions in the pathway glycan metabolism; heparin biosynthesis. Its function is as follows. Glycosyltransferase required for the biosynthesis of heparan-sulfate and responsible for the alternating addition of beta-1-4-linked glucuronic acid (GlcA) and alpha-1-4-linked N-acetylglucosamine (GlcNAc) units to nascent heparan sulfate chains. Botv is the trigger of heparan sulfate chain initiation and polymerization takes place by a complex of ttv and sotv. Plays a central role in the diffusion of morphogens hedgehog (hh), wingless (wg) and decapentaplegic (dpp) via its role in heparan sulfate proteoglycans (HSPGs) biosynthesis which are required for movement of hh, dpp and wg morphogens. The protein is Exostosin-1 (ttv) of Drosophila melanogaster (Fruit fly).